The primary structure comprises 202 residues: CASP-like protein 1U4 (202 aa).

The Cytoplasmic portion of the chain corresponds to Met-1 to Pro-10. Residues Val-11–Leu-31 form a helical membrane-spanning segment. Topologically, residues Thr-32–Ala-56 are extracellular. Residues Phe-57–Leu-77 form a helical membrane-spanning segment. At Ser-78–Met-94 the chain is on the cytoplasmic side. The helical transmembrane segment at Leu-95–Val-115 threads the bilayer. Topologically, residues Gly-116 to His-146 are extracellular. Residues Val-147 to Leu-167 traverse the membrane as a helical segment. The Cytoplasmic portion of the chain corresponds to Thr-168–His-202.

This sequence belongs to the Casparian strip membrane proteins (CASP) family. In terms of assembly, homodimer and heterodimers.

It localises to the cell membrane. In Sorghum bicolor (Sorghum), this protein is CASP-like protein 1U4.